A 991-amino-acid polypeptide reads, in one-letter code: uncharacterized protein (991 aa).

The signal sequence occupies residues 1–17 (MLWPAALVAMFALAARA). Disordered stretches follow at residues 332–352 (DPLPRAPDYSYPTDDPAGETT), 392–425 (TTEDLTQETSTPTVTTVIDPTSGAVTTESRTTEG), 469–511 (EDST…EDTT), 542–569 (DTEAAQSATSISDAVTPEDLTPETTTPV), 587–641 (PAPT…NSLS), and 658–734 (ASSG…PPRI). The span at 400-413 (TSTPTVTTVIDPTS) shows a compositional bias: low complexity. A compositionally biased stretch (polar residues) spans 414–425 (GAVTTESRTTEG). The span at 472–493 (TTTARAAEYPTPTTTTVEPRPA) shows a compositional bias: low complexity. A compositionally biased stretch (polar residues) spans 542 to 554 (DTEAAQSATSISD). Low complexity-rich tracts occupy residues 556–569 (VTPEDLTPETTTPV) and 598–615 (ASTTPAPTATAVPTSHTP). Composition is skewed to polar residues over residues 617 to 628 (PQESTSTPSRAP) and 658 to 667 (ASSGPGASTG). Over residues 668–682 (ATTAPISPPWSASPA) the composition is skewed to low complexity. Over residues 686 to 710 (VTTSAARTLEPSSTRKAVAAESTTA) the composition is skewed to polar residues.

This is an uncharacterized protein from Psittacid herpesvirus 1 (isolate Amazon parrot/-/97-0001/1997) (PsHV-1).